Consider the following 149-residue polypeptide: MHCPFCSAVDTKVIDSRLVAEGHQVRRRRECLLCHERFTTFEMAELVMPRVIKSNGSREPFNEDKLRAGILRALEKRPVSMEAIEKAVNHIKSRLRATGEREVASQLVGNLVMDELKSLDKVAYIRFASVYRSFEDIREFGEEIAKLEK.

Residues 3-34 (CPFCSAVDTKVIDSRLVAEGHQVRRRRECLLC) fold into a zinc finger. The ATP-cone domain occupies 49 to 139 (PRVIKSNGSR…VYRSFEDIRE (91 aa)).

It belongs to the NrdR family. Zn(2+) serves as cofactor.

Negatively regulates transcription of bacterial ribonucleotide reductase nrd genes and operons by binding to NrdR-boxes. This Aeromonas hydrophila subsp. hydrophila (strain ATCC 7966 / DSM 30187 / BCRC 13018 / CCUG 14551 / JCM 1027 / KCTC 2358 / NCIMB 9240 / NCTC 8049) protein is Transcriptional repressor NrdR.